We begin with the raw amino-acid sequence, 1087 residues long: Voltage-gated inwardly rectifying potassium channel KCNH3 (1087 aa).

Residues 1-228 are Cytoplasmic-facing; it reads MPAMRGLLAP…HCGALRATWD (228 aa). The PAS domain maps to 18–90; that stretch reads IATRFDGTHS…QQIRKALDEH (73 aa). Residues 93–145 form the PAC domain; the sequence is FKAELILYRKSGLPFWCLLDVIPIKNEKGEVALFLVSHKDISETKNRGGPDNW. The segment covering 137–150 has biased composition (basic and acidic residues); that stretch reads KNRGGPDNWKERGG. The segment at 137–161 is disordered; sequence KNRGGPDNWKERGGGRRRYGRAGSK. Residues 229-249 traverse the membrane as a helical segment; the sequence is GFILLATLYVAVTVPYSVCVS. The Extracellular segment spans residues 250–259; that stretch reads TAREPSAARG. A helical membrane pass occupies residues 260–280; the sequence is PPSVCDLAVEVLFILDIVLNF. At 281–302 the chain is on the cytoplasmic side; the sequence is RTTFVSKSGQVVFAPKSICLHY. A helical transmembrane segment spans residues 303–323; sequence VTTWFLLDVIAALPFDLLHAF. The Extracellular portion of the chain corresponds to 324 to 331; it reads KVNVYVGA. The chain crosses the membrane as a helical; Voltage-sensor span at residues 332–352; sequence HLLKTVRLLRLLRLLPRLDRY. Residues 353-361 lie on the Cytoplasmic side of the membrane; that stretch reads SQYSAVVLT. Residues 362–382 traverse the membrane as a helical segment; it reads LLMAVFALLAHWVACVWFYIG. The Extracellular segment spans residues 383 to 456; it reads QQEIENSESE…GGPSLRSAYI (74 aa). Residues 416 to 436 form a disordered region; that stretch reads SPDGGNSSGQSENCSSSGGGS. The span at 419 to 431 shows a compositional bias: low complexity; that stretch reads GGNSSGQSENCSS. N-linked (GlcNAc...) asparagine glycans are attached at residues Asn421, Asn428, and Asn439. Positions 457 to 477 form an intramembrane region, pore-forming; it reads TSLYFALSSLTSVGFGNVSAN. The short motif at 468-473 is the Selectivity filter element; the sequence is SVGFGN. The Extracellular portion of the chain corresponds to 478–482; the sequence is TDTEK. Residues 483-503 traverse the membrane as a helical segment; sequence IFSICTMLIGALMHAVVFGNV. The Cytoplasmic segment spans residues 504–1087; the sequence is TAIIQRMYAR…QWTQEEGTGV (584 aa). Residue 585–700 participates in a nucleoside 3',5'-cyclic phosphate binding; that stretch reads LFEAASRGCL…FAPRFSRGLR (116 aa). 2 disordered regions span residues 733-813 and 975-1061; these read EKET…LQLP and LMAP…PWDP. Basic residues predominate over residues 776 to 788; the sequence is TAPRPRLGGRGRP.

This sequence belongs to the potassium channel family. H (Eag) (TC 1.A.1.20) subfamily. Kv12.2/KCNH3 sub-subfamily. In terms of assembly, the potassium channel is probably composed of a homo- or heterotetrameric complex of pore-forming alpha subunits that can associate with modulating beta subunits. Interacts with KCNE1 and KCNE3; these interactions regulate KCNH3 trafficking to the plasma membrane and its subsequent voltage-gated potassium channel activity. In terms of processing, N-glycosylated. N-glycosylation mediates traffick to the cell membrane but is not necessary for voltage-gated potassium channel activity. As to expression, highly expressed in adult and embryonic brain, in particular in cerebellum, brain stem, hippocampus, cortex and striatum. Also found in pituitary.

Its subcellular location is the cell membrane. The catalysed reaction is K(+)(in) = K(+)(out). In terms of biological role, pore-forming (alpha) subunit of a voltage-gated inwardly rectifying potassium channel. Charactherized by a fast rate of activation during depolarization followed by a rapid inactivation at much more depolarized value causing inward rectification due to a C-type inactivation mechanism. Exhibits a rapid recovery from inactivation. The protein is Voltage-gated inwardly rectifying potassium channel KCNH3 of Rattus norvegicus (Rat).